The sequence spans 365 residues: S-adenosylmethionine:tRNA ribosyltransferase-isomerase (365 aa).

Belongs to the QueA family. Monomer.

Its subcellular location is the cytoplasm. It carries out the reaction 7-aminomethyl-7-carbaguanosine(34) in tRNA + S-adenosyl-L-methionine = epoxyqueuosine(34) in tRNA + adenine + L-methionine + 2 H(+). It participates in tRNA modification; tRNA-queuosine biosynthesis. Functionally, transfers and isomerizes the ribose moiety from AdoMet to the 7-aminomethyl group of 7-deazaguanine (preQ1-tRNA) to give epoxyqueuosine (oQ-tRNA). The chain is S-adenosylmethionine:tRNA ribosyltransferase-isomerase from Helicobacter hepaticus (strain ATCC 51449 / 3B1).